Here is a 466-residue protein sequence, read N- to C-terminus: 3-isopropylmalate dehydratase large subunit (466 aa).

[4Fe-4S] cluster-binding residues include C345, C405, and C408.

Belongs to the aconitase/IPM isomerase family. LeuC type 1 subfamily. As to quaternary structure, heterodimer of LeuC and LeuD. [4Fe-4S] cluster serves as cofactor.

The enzyme catalyses (2R,3S)-3-isopropylmalate = (2S)-2-isopropylmalate. It functions in the pathway amino-acid biosynthesis; L-leucine biosynthesis; L-leucine from 3-methyl-2-oxobutanoate: step 2/4. Catalyzes the isomerization between 2-isopropylmalate and 3-isopropylmalate, via the formation of 2-isopropylmaleate. In Microcystis aeruginosa (strain NIES-843 / IAM M-2473), this protein is 3-isopropylmalate dehydratase large subunit.